A 301-amino-acid chain; its full sequence is Acetyl-coenzyme A carboxylase carboxyl transferase subunit beta (301 aa).

Residues 25-294 (LWIKCPETGE…SAANDMNSGA (270 aa)) enclose the CoA carboxyltransferase N-terminal domain.

This sequence belongs to the AccD/PCCB family. Acetyl-CoA carboxylase is a heterohexamer composed of biotin carboxyl carrier protein (AccB), biotin carboxylase (AccC) and two subunits each of ACCase subunit alpha (AccA) and ACCase subunit beta (AccD).

Its subcellular location is the cytoplasm. It carries out the reaction N(6)-carboxybiotinyl-L-lysyl-[protein] + acetyl-CoA = N(6)-biotinyl-L-lysyl-[protein] + malonyl-CoA. It participates in lipid metabolism; malonyl-CoA biosynthesis; malonyl-CoA from acetyl-CoA: step 1/1. Functionally, component of the acetyl coenzyme A carboxylase (ACC) complex. Biotin carboxylase (BC) catalyzes the carboxylation of biotin on its carrier protein (BCCP) and then the CO(2) group is transferred by the transcarboxylase to acetyl-CoA to form malonyl-CoA. This chain is Acetyl-coenzyme A carboxylase carboxyl transferase subunit beta, found in Rhizobium leguminosarum bv. trifolii (strain WSM1325).